A 417-amino-acid polypeptide reads, in one-letter code: Serine hydroxymethyltransferase (417 aa).

(6S)-5,6,7,8-tetrahydrofolate contacts are provided by residues Leu121 and 125-127 (GHL). Residue Lys229 is modified to N6-(pyridoxal phosphate)lysine. A (6S)-5,6,7,8-tetrahydrofolate-binding site is contributed by 355–357 (SPF).

This sequence belongs to the SHMT family. In terms of assembly, homodimer. Requires pyridoxal 5'-phosphate as cofactor.

The protein localises to the cytoplasm. It carries out the reaction (6R)-5,10-methylene-5,6,7,8-tetrahydrofolate + glycine + H2O = (6S)-5,6,7,8-tetrahydrofolate + L-serine. It participates in one-carbon metabolism; tetrahydrofolate interconversion. It functions in the pathway amino-acid biosynthesis; glycine biosynthesis; glycine from L-serine: step 1/1. In terms of biological role, catalyzes the reversible interconversion of serine and glycine with tetrahydrofolate (THF) serving as the one-carbon carrier. This reaction serves as the major source of one-carbon groups required for the biosynthesis of purines, thymidylate, methionine, and other important biomolecules. Also exhibits THF-independent aldolase activity toward beta-hydroxyamino acids, producing glycine and aldehydes, via a retro-aldol mechanism. The sequence is that of Serine hydroxymethyltransferase from Xylella fastidiosa (strain M12).